Consider the following 126-residue polypeptide: MIEQLKQAKNWEDRYRLIIQAGKNLPRPSDNELAQMQPITGCEAQMWFQIMPKNDRTFQFSGFSEARIMNGLLWILFNQINGKTADELNTFDITVFFSELGISQRLSEMRLNGLNQIGQQLKNLCI.

This sequence belongs to the SufE family.

This is an uncharacterized protein from Haemophilus influenzae (strain ATCC 51907 / DSM 11121 / KW20 / Rd).